A 204-amino-acid chain; its full sequence is Urease accessory protein UreG 1 (204 aa).

Residue 14–21 (GPVGSGKT) coordinates GTP.

The protein belongs to the SIMIBI class G3E GTPase family. UreG subfamily. In terms of assembly, homodimer. UreD, UreF and UreG form a complex that acts as a GTP-hydrolysis-dependent molecular chaperone, activating the urease apoprotein by helping to assemble the nickel containing metallocenter of UreC. The UreE protein probably delivers the nickel.

Its subcellular location is the cytoplasm. Functionally, facilitates the functional incorporation of the urease nickel metallocenter. This process requires GTP hydrolysis, probably effectuated by UreG. This chain is Urease accessory protein UreG 1, found in Methylorubrum extorquens (strain PA1) (Methylobacterium extorquens).